The following is a 219-amino-acid chain: MAGAQPFLADGNQELFPCEVCGRRFAADVLERHGPICRKLFNKKRKPFNSLKQRLRGTDIPTVGKAPQSKPQPVRKSNWRQHHEDFINAIQSAKQCTLAIKEGRPLPPPPPPTVNPDYIQCPYCKRRFNETAASRHINFCKDQESRRVFDPAQTAARLASRAQGRAQMSPKKELTVTSAVGALLQNRALEASAAPTRPAVDPASGAKLRQGFAKSSKKD.

2 consecutive C2HC/C3H-type zinc fingers follow at residues 14–43 and 117–146; these read ELFP…LFNK and DYIQ…QESR. 8 residues coordinate Zn(2+): cysteine 18, cysteine 21, histidine 33, cysteine 37, cysteine 121, cysteine 124, histidine 136, and cysteine 140. The disordered stretch occupies residues 190 to 219; that stretch reads EASAAPTRPAVDPASGAKLRQGFAKSSKKD.

This sequence belongs to the ZC2HC1 family. Zn(2+) serves as cofactor.

The polypeptide is Zinc finger C2HC domain-containing protein 1B (ZC2HC1B) (Bos taurus (Bovine)).